The chain runs to 474 residues: Trigger factor (474 aa).

The region spanning 165 to 250 is the PPIase FKBP-type domain; sequence GDRVTIDYLG…VKTVSKPDEL (86 aa). Over residues 451–467 the composition is skewed to basic and acidic residues; the sequence is VKKKTASDNKKSNEIKK. Positions 451-474 are disordered; it reads VKKKTASDNKKSNEIKKKSTMKKV.

Belongs to the FKBP-type PPIase family. Tig subfamily.

The protein resides in the cytoplasm. It carries out the reaction [protein]-peptidylproline (omega=180) = [protein]-peptidylproline (omega=0). In terms of biological role, involved in protein export. Acts as a chaperone by maintaining the newly synthesized protein in an open conformation. Functions as a peptidyl-prolyl cis-trans isomerase. The protein is Trigger factor of Bartonella bacilliformis (strain ATCC 35685 / KC583 / Herrer 020/F12,63).